Here is a 393-residue protein sequence, read N- to C-terminus: G protein-activated inward rectifier potassium channel 3 (393 aa).

The interval 1–23 is disordered; the sequence is MAQENAAFSPGQEEPPRRRGRQR. The Cytoplasmic segment spans residues 1–57; it reads MAQENAAFSPGQEEPPRRRGRQRYVEKDGRCNVQQGNVRETYRYLTDLFTTLVDLQW. Residues 58–82 traverse the membrane as a helical segment; sequence RLSLLFFVLAYALTWLFFGAIWWLI. Residues 83–106 lie on the Extracellular side of the membrane; it reads AYGRGDLEHLEDTAWTPCVNNLNG. Residues 107 to 118 constitute an intramembrane region (helical; Pore-forming); the sequence is FVAAFLFSIETE. An intramembrane region (pore-forming) is located at residues 119–125; the sequence is TTIGYGH. The short motif at 120–125 is the Selectivity filter element; the sequence is TIGYGH. Topologically, residues 126-134 are extracellular; it reads RVITDQCPE. Residues 135–156 traverse the membrane as a helical segment; the sequence is GIVLLLLQAILGSMVNAFMVGC. Residues 157-393 are Cytoplasmic-facing; the sequence is MFVKISQPNK…LPPPESESKV (237 aa). Residues 360–393 form a disordered region; that stretch reads KVEEEGAGEGAGGEAGADKEQNGCLPPPESESKV. Over residues 384-393 the composition is skewed to pro residues; the sequence is LPPPESESKV. Positions 390 to 393 match the PDZ-binding motif; the sequence is ESKV.

The protein belongs to the inward rectifier-type potassium channel (TC 1.A.2.1) family. KCNJ9 subfamily. Associates with KCNJ3/GIRK1 to form a G-protein-activated heteromultimer pore-forming unit. Interacts (via PDZ-binding motif) with SNX27 (via PDZ domain); the interaction is required when endocytosed to prevent degradation in lysosomes and promote recycling to the plasma membrane.

Its subcellular location is the membrane. The enzyme catalyses K(+)(in) = K(+)(out). In terms of biological role, inward rectifier potassium channels are characterized by a greater tendency to allow potassium to flow into the cell rather than out of it. Their voltage dependence is regulated by the concentration of extracellular potassium; as external potassium is raised, the voltage range of the channel opening shifts to more positive voltages. The inward rectification is mainly due to the blockage of outward current by internal magnesium, This receptor is controlled by G proteins. Unable to produce channel activity when expressed alone. Forms a functional channel in association with KCNJ3/GIRK1. This Homo sapiens (Human) protein is G protein-activated inward rectifier potassium channel 3 (KCNJ9).